Here is a 222-residue protein sequence, read N- to C-terminus: Urease accessory protein UreF (222 aa).

Belongs to the UreF family. In terms of assembly, ureD, UreF and UreG form a complex that acts as a GTP-hydrolysis-dependent molecular chaperone, activating the urease apoprotein by helping to assemble the nickel containing metallocenter of UreC. The UreE protein probably delivers the nickel.

It localises to the cytoplasm. Functionally, required for maturation of urease via the functional incorporation of the urease nickel metallocenter. The polypeptide is Urease accessory protein UreF (Hahella chejuensis (strain KCTC 2396)).